The following is a 201-amino-acid chain: dTTP/UTP pyrophosphatase (201 aa).

The Proton acceptor role is filled by Asp-81.

The protein belongs to the Maf family. YhdE subfamily. It depends on a divalent metal cation as a cofactor.

It is found in the cytoplasm. The enzyme catalyses dTTP + H2O = dTMP + diphosphate + H(+). The catalysed reaction is UTP + H2O = UMP + diphosphate + H(+). In terms of biological role, nucleoside triphosphate pyrophosphatase that hydrolyzes dTTP and UTP. May have a dual role in cell division arrest and in preventing the incorporation of modified nucleotides into cellular nucleic acids. This Dechloromonas aromatica (strain RCB) protein is dTTP/UTP pyrophosphatase.